The chain runs to 329 residues: Malate dehydrogenase (329 aa).

12–18 (GAAGQIC) is a binding site for NAD(+). 2 residues coordinate substrate: R95 and R101. Residues N108, Q115, and 132 to 134 (VGN) each bind NAD(+). N134 and R165 together coordinate substrate. H190 serves as the catalytic Proton acceptor.

It belongs to the LDH/MDH superfamily. MDH type 2 family. In terms of assembly, homodimer.

It catalyses the reaction (S)-malate + NAD(+) = oxaloacetate + NADH + H(+). In terms of biological role, catalyzes the reversible oxidation of malate to oxaloacetate. This chain is Malate dehydrogenase, found in Aquaspirillum arcticum.